Here is a 963-residue protein sequence, read N- to C-terminus: Importin-13 (963 aa).

HEAT repeat units lie at residues 24 to 54 (ENVE…QAQV), 56 to 88 (PQAW…KISR), 95 to 135 (TDQY…LSMM), 142 to 179 (AVAD…EFQT), 194 to 231 (LAVE…SWVQ), 236 to 268 (LQDC…NAIS), 276 to 325 (VNTL…ALLD), 330 to 372 (WQSF…DDIL), 375 to 438 (EAEK…YEML), 440 to 476 (AELL…FQSI), 487 to 522 (VVPG…WLAD), 524 to 558 (PVMI…CREC), 562 to 600 (LPPY…LLSA), 603 to 648 (VEEN…SNLF), 676 to 716 (PVVV…VKTL), 720 to 754 (FAPM…VHIF), 761 to 803 (FPPI…ALKR), 815 to 845 (VKAV…TELL), 860 to 893 (EDGR…FALN), and 897 to 931 (FSLL…QQIL). The 67-residue stretch at 45–111 (AQKWLMQAQV…KAHSFTQITR (67 aa)) folds into the Importin N-terminal domain.

It belongs to the importin beta family. As to quaternary structure, interacts with UBC9, RAN, RBM8A, eIF-1A and PAX6. Expressed in fetal brain, heart, intestine and kidney.

The protein resides in the cytoplasm. It localises to the nucleus. Functions in nuclear protein import as nuclear transport receptor. Serves as receptor for nuclear localization signals (NLS) in cargo substrates. Is thought to mediate docking of the importin/substrate complex to the nuclear pore complex (NPC) through binding to nucleoporin and the complex is subsequently translocated through the pore by an energy requiring, Ran-dependent mechanism. At the nucleoplasmic side of the NPC, Ran binds to the importin, the importin/substrate complex dissociates and importin is re-exported from the nucleus to the cytoplasm where GTP hydrolysis releases Ran. The directionality of nuclear import is thought to be conferred by an asymmetric distribution of the GTP- and GDP-bound forms of Ran between the cytoplasm and nucleus. Mediates the nuclear import of UBC9, the RBM8A/MAGOH complex, PAX6 and probably other members of the paired homeobox family. Also mediates nuclear export of eIF-1A, and the cytoplasmic release of eIF-1A is triggered by the loading of import substrates onto IPO13. This is Importin-13 (Ipo13) from Rattus norvegicus (Rat).